A 93-amino-acid chain; its full sequence is UPF0358 protein LMHCC_1561 (93 aa).

This sequence belongs to the UPF0358 family.

This is UPF0358 protein LMHCC_1561 from Listeria monocytogenes serotype 4a (strain HCC23).